The sequence spans 265 residues: Homeobox protein engrailed-2-A (265 aa).

Basic and acidic residues-rich tracts occupy residues 1–12 and 102–115; these read MEENEQNNREVE and GEKKSDLAMEETLK. 3 disordered regions span residues 1–38, 75–140, and 156–181; these read MEENEQNNREVEPQQESGEESNRGILHQAPPGNHQPHH, LSGA…KATQ, and DRPSSGPRSRKPKKKSVSKEDKRPRT. Over residues 122 to 136 the composition is skewed to low complexity; it reads DHSLSSDSDSSQTSS. Residues 176 to 235 constitute a DNA-binding region (homeobox); it reads DKRPRTAFTADQLQRLKAEFQTNRYLTEQRRQSLAQELSLNESQIKIWFQNKRAKIKKAT.

The protein belongs to the engrailed homeobox family.

The protein localises to the nucleus. The polypeptide is Homeobox protein engrailed-2-A (en2-a) (Xenopus laevis (African clawed frog)).